A 211-amino-acid polypeptide reads, in one-letter code: FMN-dependent NADH:quinone oxidoreductase (211 aa).

17–19 (SYS) lines the FMN pocket.

Belongs to the azoreductase type 1 family. Homodimer. FMN serves as cofactor.

The enzyme catalyses 2 a quinone + NADH + H(+) = 2 a 1,4-benzosemiquinone + NAD(+). It carries out the reaction N,N-dimethyl-1,4-phenylenediamine + anthranilate + 2 NAD(+) = 2-(4-dimethylaminophenyl)diazenylbenzoate + 2 NADH + 2 H(+). Functionally, quinone reductase that provides resistance to thiol-specific stress caused by electrophilic quinones. In terms of biological role, also exhibits azoreductase activity. Catalyzes the reductive cleavage of the azo bond in aromatic azo compounds to the corresponding amines. This Bacillus velezensis (strain DSM 23117 / BGSC 10A6 / LMG 26770 / FZB42) (Bacillus amyloliquefaciens subsp. plantarum) protein is FMN-dependent NADH:quinone oxidoreductase.